Consider the following 314-residue polypeptide: Homoserine kinase (314 aa).

Position 96 to 106 (96 to 106) interacts with ATP; sequence PIGSGLGSSAC.

The protein belongs to the GHMP kinase family. Homoserine kinase subfamily.

The protein resides in the cytoplasm. It catalyses the reaction L-homoserine + ATP = O-phospho-L-homoserine + ADP + H(+). It participates in amino-acid biosynthesis; L-threonine biosynthesis; L-threonine from L-aspartate: step 4/5. In terms of biological role, catalyzes the ATP-dependent phosphorylation of L-homoserine to L-homoserine phosphate. The chain is Homoserine kinase from Mannheimia succiniciproducens (strain KCTC 0769BP / MBEL55E).